A 204-amino-acid chain; its full sequence is Per os infectivity factor 3 (204 aa).

In terms of assembly, forms the PIF complex together with PIF1 and PIF2. The complex also interacts with per os infectivity factor PIF0.

Its function is as follows. Per os factor that plays a role in the initiation of host midgut infection. Unlike PIF1 and PIF2, PIF3 is not involved in specific binding of occluded virions (ODV) to the host midgut target cells. The chain is Per os infectivity factor 3 (AC115) from Lepidoptera (butterflies and moths).